Reading from the N-terminus, the 362-residue chain is Putative HLA class I histocompatibility antigen, alpha chain H (362 aa).

The N-terminal stretch at Met1 to Ala24 is a signal peptide. An alpha-1 region spans residues Arg25–Gly114. Residues Arg25 to Ile308 are Extracellular-facing. A glycan (N-linked (GlcNAc...) asparagine) is linked at Asn110. Residues Gly115–Ala206 are alpha-2. The alpha-3 stretch occupies residues Asp207–Trp298. One can recognise an Ig-like C1-type domain in the interval Pro209–Arg297. The cysteines at positions 227 and 283 are disulfide-linked. A connecting peptide region spans residues Glu299–Ile308. The chain crosses the membrane as a helical span at residues Val309–Trp332. Residues Arg333–Ala362 lie on the Cytoplasmic side of the membrane. Residues Ser337–Ala362 form a disordered region. A compositionally biased stretch (low complexity) spans Gly342–Ser356.

This sequence belongs to the MHC class I family. In terms of assembly, heterodimer of an alpha chain and a beta chain (beta-2-microglobulin).

It localises to the cell membrane. Functionally, involved in the presentation of foreign antigens to the immune system. This chain is Putative HLA class I histocompatibility antigen, alpha chain H (HLA-H), found in Homo sapiens (Human).